The following is a 110-amino-acid chain: Large ribosomal subunit protein uL22 (110 aa).

This sequence belongs to the universal ribosomal protein uL22 family. In terms of assembly, part of the 50S ribosomal subunit.

This protein binds specifically to 23S rRNA; its binding is stimulated by other ribosomal proteins, e.g. L4, L17, and L20. It is important during the early stages of 50S assembly. It makes multiple contacts with different domains of the 23S rRNA in the assembled 50S subunit and ribosome. Functionally, the globular domain of the protein is located near the polypeptide exit tunnel on the outside of the subunit, while an extended beta-hairpin is found that lines the wall of the exit tunnel in the center of the 70S ribosome. In Aggregatibacter actinomycetemcomitans (Actinobacillus actinomycetemcomitans), this protein is Large ribosomal subunit protein uL22.